The primary structure comprises 216 residues: Thioredoxin-like 2, chloroplastic (216 aa).

A chloroplast-targeting transit peptide spans 1 to 58 (MAEALLPLPRRLVVTASTPACSSASSSTSPSPHCLLSRANPRPPRLAAPSPPRHRRLK). A compositionally biased stretch (low complexity) spans 19–40 (PACSSASSSTSPSPHCLLSRAN). Positions 19 to 70 (PACSSASSSTSPSPHCLLSRANPRPPRLAAPSPPRHRRLKAHAAVSDKSEQP) are disordered. A compositionally biased stretch (pro residues) spans 41-51 (PRPPRLAAPSP). Residues 61–188 (AAVSDKSEQP…LKDAIAVHNT (128 aa)) enclose the Thioredoxin domain. Catalysis depends on nucleophile residues Cys111 and Cys114. Cys111 and Cys114 are disulfide-bonded.

The protein belongs to the thioredoxin family.

The protein localises to the plastid. Its subcellular location is the chloroplast. Probable thiol-disulfide oxidoreductase that may participate in various redox reactions. This is Thioredoxin-like 2, chloroplastic from Oryza sativa subsp. japonica (Rice).